The chain runs to 532 residues: Spore germination protein 270-11 (532 aa).

2 disordered regions span residues threonine 113–serine 225 and leucine 328–threonine 436. Low complexity predominate over residues serine 329–proline 426. 13 tandem repeats follow at residues threonine 339 to proline 342, threonine 343 to proline 346, threonine 347 to proline 350, threonine 351 to proline 354, threonine 355 to proline 358, threonine 359 to proline 362, threonine 363 to proline 366, threonine 367 to proline 370, threonine 371 to glutamate 374, threonine 375 to proline 378, threonine 397 to proline 400, threonine 401 to aspartate 404, and threonine 405 to proline 408. The tract at residues threonine 339–proline 378 is 10 X 4 AA tandem repeats of T-[EP]-T-[EP]. The interval threonine 397 to proline 408 is 3 X 4 AA tandem repeats of T-[EP]-T-[PD].

The sequence is that of Spore germination protein 270-11 (celB) from Dictyostelium discoideum (Social amoeba).